Consider the following 83-residue polypeptide: Putative membrane protein insertion efficiency factor (83 aa).

It belongs to the UPF0161 family.

The protein resides in the cell membrane. Its function is as follows. Could be involved in insertion of integral membrane proteins into the membrane. The chain is Putative membrane protein insertion efficiency factor from Staphylococcus saprophyticus subsp. saprophyticus (strain ATCC 15305 / DSM 20229 / NCIMB 8711 / NCTC 7292 / S-41).